The following is a 466-amino-acid chain: Acetylcholine-gated chloride channel subunit acc-1 (466 aa).

Residues 1–24 (MSHPGWIMVSFLTELLSQSSKGIA) form the signal peptide. Residues 25–242 (QSLDNCANDT…FVFERRYGWY (218 aa)) lie on the Extracellular side of the membrane. N-linked (GlcNAc...) asparagine glycans are attached at residues N32, N102, and N143. C158 and C172 form a disulfide bridge. An N-linked (GlcNAc...) asparagine glycan is attached at N211. The chain crosses the membrane as a helical span at residues 243–263 (VLQGYIPTMVTIVISWISFYL). Over 264–272 (GPRAIPART) the chain is Cytoplasmic. A helical membrane pass occupies residues 273–290 (MLGVNSLLAMTFQFGNII). The Extracellular portion of the chain corresponds to 291–304 (RNLPRVSYVKAIDV). Residues 305 to 325 (WMLSGMLFIFLSLLELAVVGF) form a helical membrane-spanning segment. Over 326–427 (MSRNEGLPPK…MRELRPETVD (102 aa)) the chain is Cytoplasmic. A disordered region spans residues 333-352 (PPKVKKRKRQEDDDEGFSWK). Residues 428–448 (FYSAIFFPTAYMLFNISYWSF) traverse the membrane as a helical segment. The Extracellular portion of the chain corresponds to 449 to 466 (YLTSLSEYFDEDVNIDQP).

This sequence belongs to the ligand-gated ion channel (TC 1.A.9) family. In terms of assembly, homopentamer (in vitro). Forms heteropentamers composed of acc-1 and acc-4 or acc-1 and acc-3. Both homopentamers and heteropentamers form functional ion channels. As to expression, expressed in a subset of cholinergic motor neurons including cholinergic motor neurons in the ventral cord, the retrovesicular ganglion and in head neurons such as the SMD, RMD motor neurons, the AVA and AVE command interneurons and the SAA neurons. Also expressed in a small number of glutamatergic neurons including the pharyngeal neurons MI and M3, the PLM neurons and a pair of neurons in the lateral ganglion.

The protein resides in the cell membrane. In terms of biological role, acetylcholine-gated chloride channel subunit. Forms functional homopentameric (in vitro) and functional heteropentameric ion channels with acc-3 and acc-4 ion channel subunits. Currents in channels are triggered in response to acetylcholine, but not in response to GABA, glutamate, glycine, histamine or dopamine. In Caenorhabditis elegans, this protein is Acetylcholine-gated chloride channel subunit acc-1.